Here is a 426-residue protein sequence, read N- to C-terminus: Transcription termination factor Rho (426 aa).

The Rho RNA-BD domain maps to 58 to 131; that stretch reads QSLARGYLDI…VRVEAVNGLD (74 aa). ATP is bound by residues 176 to 181, 188 to 193, and Arg219; these read GRGQRA and KAGKTT.

The protein belongs to the Rho family. As to quaternary structure, homohexamer. The homohexamer assembles into an open ring structure.

Functionally, facilitates transcription termination by a mechanism that involves Rho binding to the nascent RNA, activation of Rho's RNA-dependent ATPase activity, and release of the mRNA from the DNA template. In Deinococcus radiodurans (strain ATCC 13939 / DSM 20539 / JCM 16871 / CCUG 27074 / LMG 4051 / NBRC 15346 / NCIMB 9279 / VKM B-1422 / R1), this protein is Transcription termination factor Rho.